A 736-amino-acid polypeptide reads, in one-letter code: RNA-binding protein RMD9-like, mitochondrial (736 aa).

Disordered stretches follow at residues 1–28 (MFRFAQPANVLKGKAPSQIVPPHPKTNS), 124–148 (PRRSNMRNNGNNNMNNGRRTEHPNT), and 566–618 (NRGI…GTPV). Residues 1-79 (MFRFAQPANV…HFKNQFSSRN (79 aa)) constitute a mitochondrion transit peptide. Low complexity predominate over residues 125-140 (RRSNMRNNGNNNMNNG). Positions 566-578 (NRGISSSSPMSAV) are enriched in polar residues. Residues 579–596 (NSLAPSTTNTPSPSLSPI) are compositionally biased toward low complexity. Positions 602–613 (LSSARNTPNKIW) are enriched in polar residues.

This sequence belongs to the RMD9 family. In terms of assembly, monomer. Post-translationally, phosphorylated. Phosphorylation promotes binding to RNA.

The protein resides in the mitochondrion inner membrane. In terms of biological role, may be involved in the processing or stability of mitochondrial mRNAs. The protein is RNA-binding protein RMD9-like, mitochondrial of Candida glabrata (strain ATCC 2001 / BCRC 20586 / JCM 3761 / NBRC 0622 / NRRL Y-65 / CBS 138) (Yeast).